The sequence spans 400 residues: Putative zinc-binding protein ORF78 (400 aa).

The interval 9–33 (LPRKRRAVAQPRTRQPPPKVHREDT) is disordered.

The protein is Putative zinc-binding protein ORF78 (ORF78) of Ictalurid herpesvirus 1 (strain Auburn) (IcHV-1).